We begin with the raw amino-acid sequence, 125 residues long: Cu-Zn superoxide dismutase-like protein OPG175 (125 aa).

Cysteine 52 and cysteine 102 form a disulfide bridge.

Belongs to the Cu-Zn superoxide dismutase family.

It localises to the virion. The protein localises to the host cytoplasm. Functionally, superoxide dismutase-like protein with no enzymatic activity. In Vaccinia virus (strain Western Reserve) (VACV), this protein is Cu-Zn superoxide dismutase-like protein OPG175 (OPG175).